Here is a 239-residue protein sequence, read N- to C-terminus: Ribosomal RNA small subunit methyltransferase G (239 aa).

S-adenosyl-L-methionine-binding positions include Gly-79, Phe-84, 130–131, and Arg-149; that span reads AE.

This sequence belongs to the methyltransferase superfamily. RNA methyltransferase RsmG family.

Its subcellular location is the cytoplasm. Specifically methylates the N7 position of a guanine in 16S rRNA. The chain is Ribosomal RNA small subunit methyltransferase G from Lactobacillus johnsonii (strain CNCM I-12250 / La1 / NCC 533).